The chain runs to 119 residues: Membrane-anchored ubiquitin-fold protein 6 (119 aa).

The region spanning 8 to 76 is the Ubiquitin-like domain; sequence IELKFRLADG…NNRTLAESRL (69 aa). Cys114 carries the S-palmitoyl cysteine lipid modification. Cys116 carries the post-translational modification Cysteine methyl ester. A lipid anchor (S-geranylgeranyl cysteine) is attached at Cys116. A propeptide spans 117–119 (removed in mature form); it reads TIL.

In terms of tissue distribution, ubiquitous.

The protein localises to the cell membrane. May serve as docking site to facilitate the association of other proteins to the plasma membrane. The polypeptide is Membrane-anchored ubiquitin-fold protein 6 (MUB6) (Arabidopsis thaliana (Mouse-ear cress)).